We begin with the raw amino-acid sequence, 80 residues long: MSLEILEQLEAKVQMAVDTIALLQMEVEELKETNAALTQDLEQANNGRSEVEQEAQRARDEQAQFEARIRGLLGKMDEVE.

Residues 3–80 adopt a coiled-coil conformation; that stretch reads LEILEQLEAK…GLLGKMDEVE (78 aa). The tract at residues 41-60 is disordered; the sequence is LEQANNGRSEVEQEAQRARD. A compositionally biased stretch (basic and acidic residues) spans 49–60; the sequence is SEVEQEAQRARD.

Belongs to the ZapB family. In terms of assembly, homodimer. The ends of the coiled-coil dimer bind to each other, forming polymers. Interacts with FtsZ.

The protein localises to the cytoplasm. Non-essential, abundant cell division factor that is required for proper Z-ring formation. It is recruited early to the divisome by direct interaction with FtsZ, stimulating Z-ring assembly and thereby promoting cell division earlier in the cell cycle. Its recruitment to the Z-ring requires functional FtsA or ZipA. This is Cell division protein ZapB from Aliivibrio fischeri (strain ATCC 700601 / ES114) (Vibrio fischeri).